A 147-amino-acid chain; its full sequence is Hemoglobin subunit beta (147 aa).

At Val-2 the chain carries N-acetylvaline. Positions 3–147 constitute a Globin domain; that stretch reads HLADDEKAAV…VSTALAHKYH (145 aa). Residue Ser-45 is modified to Phosphoserine. An N6-acetyllysine modification is found at Lys-60. His-64 provides a ligand contact to heme b. Lys-83 is subject to N6-acetyllysine. His-93 serves as a coordination point for heme b. Cys-94 is subject to S-nitrosocysteine. Lys-145 is modified (N6-acetyllysine).

The protein belongs to the globin family. In terms of assembly, heterotetramer of two alpha chains and two beta chains. In terms of tissue distribution, red blood cells.

Involved in oxygen transport from the lung to the various peripheral tissues. This chain is Hemoglobin subunit beta (HBB), found in Bradypus tridactylus (Pale-throated three-toed sloth).